We begin with the raw amino-acid sequence, 700 residues long: Glutamine synthetase (700 aa).

The GS beta-grasp domain maps to 65–155 (YHFTPPGSSP…LPTAFCSYGG (91 aa)). The GS catalytic domain maps to 159–589 (DRDSLLRSME…TMQEMIRKDL (431 aa)). The Mg(2+) site is built by Glu-196, Glu-198, Glu-267, and Glu-274. Residues 318 to 319 (NG) and Gly-319 each bind L-glutamate. His-323 serves as a coordination point for Mg(2+). Residues Ser-327 and Arg-435 each contribute to the ATP site. Residue Arg-435 participates in L-glutamate binding. Glu-472 contacts Mg(2+).

This sequence belongs to the glutamine synthetase family. In terms of assembly, homohexamer. Requires Mg(2+) as cofactor.

It is found in the cytoplasm. It catalyses the reaction L-glutamate + NH4(+) + ATP = L-glutamine + ADP + phosphate + H(+). Its activity is regulated as follows. The activity of this enzyme is not controlled by adenylation. In terms of biological role, catalyzes the ATP-dependent biosynthesis of glutamine from glutamate and ammonia. The sequence is that of Glutamine synthetase from Butyrivibrio fibrisolvens.